The sequence spans 837 residues: Granulocyte colony-stimulating factor receptor (837 aa).

The signal sequence occupies residues 1-25 (MVGLGACTLTGVTLIFLLLPRSLES). Cystine bridges form between Cys26/Cys52 and Cys46/Cys102. An Ig-like C2-type domain is found at 26–118 (CGHIEISPPV…SVQLLDQAEL (93 aa)). The Extracellular portion of the chain corresponds to 26–626 (CGHIEISPPV…LTLRTLDPSD (601 aa)). 3 N-linked (GlcNAc...) asparagine glycosylation sites follow: Asn51, Asn94, and Asn129. 5 consecutive Fibronectin type-III domains span residues 126–231 (SPSN…LEPP), 236–331 (LDIG…LRPT), 334–433 (APTI…NEGP), 434–529 (AVTG…GERA), and 530–624 (PPHA…TLDP). Cystine bridges form between Cys132–Cys143, Cys168–Cys219, Cys178–Cys187, Cys249–Cys296, and Cys267–Cys310. Asn186 and Asn279 each carry an N-linked (GlcNAc...) asparagine glycan. The WSXWS motif signature appears at 319–323 (WSPWS). 6 N-linked (GlcNAc...) asparagine glycosylation sites follow: Asn392, Asn408, Asn474, Asn487, Asn582, and Asn613. Residues 627-650 (LNIFLGILCLVLLSTTCVVTWLCC) form a helical membrane-spanning segment. Residues 651-837 (KRRGKTSFWS…VHGVEEQGGF (187 aa)) lie on the Cytoplasmic side of the membrane. The Box 1 motif signature appears at 658–666 (FWSDVPDPA).

It belongs to the type I cytokine receptor family. Type 2 subfamily. Homodimer. The dimeric receptor binds two CSF3 molecules. Interacts with CEACAM1; down-regulates the CSF3R-STAT3 pathway through recruitment of PTPN6 that dephosphorylates CSF3R. Post-translationally, N-glycosylated. In terms of tissue distribution, found in bone marrow.

Its subcellular location is the membrane. Receptor for granulocyte colony-stimulating factor (CSF3). In addition it may function in some adhesion or recognition events at the cell surface. In Mus musculus (Mouse), this protein is Granulocyte colony-stimulating factor receptor (Csf3r).